The sequence spans 319 residues: Ribosomal RNA small subunit methyltransferase H (319 aa).

S-adenosyl-L-methionine contacts are provided by residues 37–39 (GGY), D57, F96, D105, and Q112. The segment covering 292–302 (RPDEREKERNP) has biased composition (basic and acidic residues). Positions 292–319 (RPDEREKERNPRSRSARLRAVEKQGVPA) are disordered.

This sequence belongs to the methyltransferase superfamily. RsmH family.

The protein localises to the cytoplasm. The enzyme catalyses cytidine(1402) in 16S rRNA + S-adenosyl-L-methionine = N(4)-methylcytidine(1402) in 16S rRNA + S-adenosyl-L-homocysteine + H(+). In terms of biological role, specifically methylates the N4 position of cytidine in position 1402 (C1402) of 16S rRNA. This Syntrophobacter fumaroxidans (strain DSM 10017 / MPOB) protein is Ribosomal RNA small subunit methyltransferase H.